We begin with the raw amino-acid sequence, 445 residues long: MTDSNQPTPLQARKSGALHGTARVPGDKSISHRALILGALAVGETRISGLLEGEDVINTAKAMRALGAKVERTGDCEWRVHGVGVAGFATPEAPLDFGNSGTGCRLAMGAVAGSPIVATFDGDASLRSRPMRRIVDPLELMGAKVVSSSEGGRLPLALQGARDPLPILYRTPVPSAQIKSAVLLAGLSAPGVTTVIEAEASRDHTELMLQHFGATIVTEAEGAHGRKISLTGQPELRGAPVVVPADPSSAAFPMVAALVVPGSDIELTDVMTNPLRTGLITTLREMGALIEDSDVRGDAGEPMARFRVRGSKLKGVEVPPERAPSMIDEYLVLAVAAAFAEGTTVMRGLHELRVKESDRLEATAAMLRVNGVAVEIAGDDLIVEGKGHVPGGGVVATHMDHRIAMSALAMGLASDKPVTVDDTAFIATSFPDFVPMMQRLGAEFG.

Residues 1-25 (MTDSNQPTPLQARKSGALHGTARVP) are disordered. Residues K28, S29, and R33 each coordinate 3-phosphoshikimate. Residue K28 participates in phosphoenolpyruvate binding. Phosphoenolpyruvate contacts are provided by G101 and R129. The 3-phosphoshikimate site is built by S175, Q177, D328, and K355. Q177 contacts phosphoenolpyruvate. D328 functions as the Proton acceptor in the catalytic mechanism. Phosphoenolpyruvate-binding residues include R359 and R402.

It belongs to the EPSP synthase family. As to quaternary structure, monomer.

The protein resides in the cytoplasm. The enzyme catalyses 3-phosphoshikimate + phosphoenolpyruvate = 5-O-(1-carboxyvinyl)-3-phosphoshikimate + phosphate. Its pathway is metabolic intermediate biosynthesis; chorismate biosynthesis; chorismate from D-erythrose 4-phosphate and phosphoenolpyruvate: step 6/7. Functionally, catalyzes the transfer of the enolpyruvyl moiety of phosphoenolpyruvate (PEP) to the 5-hydroxyl of shikimate-3-phosphate (S3P) to produce enolpyruvyl shikimate-3-phosphate and inorganic phosphate. The polypeptide is 3-phosphoshikimate 1-carboxyvinyltransferase (Rhodopseudomonas palustris (strain TIE-1)).